The primary structure comprises 246 residues: 4-hydroxy-tetrahydrodipicolinate reductase (246 aa).

NAD(+) is bound by residues Gly8–Met13, Gly75–Thr77, and Ala99–Tyr102. Residue His132 is the Proton donor/acceptor of the active site. A (S)-2,3,4,5-tetrahydrodipicolinate-binding site is contributed by His133. The Proton donor role is filled by Lys136. Gly142–Thr143 lines the (S)-2,3,4,5-tetrahydrodipicolinate pocket.

This sequence belongs to the DapB family.

It is found in the cytoplasm. The enzyme catalyses (S)-2,3,4,5-tetrahydrodipicolinate + NAD(+) + H2O = (2S,4S)-4-hydroxy-2,3,4,5-tetrahydrodipicolinate + NADH + H(+). The catalysed reaction is (S)-2,3,4,5-tetrahydrodipicolinate + NADP(+) + H2O = (2S,4S)-4-hydroxy-2,3,4,5-tetrahydrodipicolinate + NADPH + H(+). It participates in amino-acid biosynthesis; L-lysine biosynthesis via DAP pathway; (S)-tetrahydrodipicolinate from L-aspartate: step 4/4. Its function is as follows. Catalyzes the conversion of 4-hydroxy-tetrahydrodipicolinate (HTPA) to tetrahydrodipicolinate. The polypeptide is 4-hydroxy-tetrahydrodipicolinate reductase (Akkermansia muciniphila (strain ATCC BAA-835 / DSM 22959 / JCM 33894 / BCRC 81048 / CCUG 64013 / CIP 107961 / Muc)).